Reading from the N-terminus, the 554-residue chain is Cytochrome P450 monooxygenase himC (554 aa).

The helical transmembrane segment at 52-72 (YSVASVAIAGFTALVVSVALY) threads the bilayer. N-linked (GlcNAc...) asparagine glycosylation is found at N110, N328, N414, and N425. C501 contributes to the heme binding site.

This sequence belongs to the cytochrome P450 family. Requires heme as cofactor.

It localises to the membrane. Its pathway is secondary metabolite biosynthesis. Functionally, cytochrome P450 monooxygenase; part of the him gene cluster that mediates the biosynthesis of himeic acid A, a ubiquitin-activating enzyme (E1) inhibitor. First, himA, together with the trans-enoyl reductase himH, catalyzes the formation of apolyketide chain, which is then condensed with leucine by the NRPS activity of himA. Dieckmann cyclization and release from himA gives a tetramic acid intermediate as the product of himA PKS-NRPS. HimG then catalyzes alpha-oxidation of the tetramic acid ring, with a subsequent rearrangement to yield apyrone intermediate. Two terminal methyl groups of polyketide and amide side chains are oxidized to carboxylic acids by himC cytochrome P450 monooxygenase to form himeic acid A. Himeic acid A is further converted to himeic acid B and C during culture growth. No gene responsible for pyrone to pyridone conversion was found in the him gene cluster and himeic acid A is non-enzymatically converted to himeic acid C by the incorporation of an ammonium nitrogen atom in a pH5 buffer, and to himeic acid B at a conversion ratio of 50% during incubation in MeOH for 5 days. In Aspergillus japonicus, this protein is Cytochrome P450 monooxygenase himC.